The chain runs to 329 residues: 7,8-didemethyl-8-hydroxy-5-deazariboflavin synthase (329 aa).

One can recognise a Radical SAM core domain in the interval 1 to 235 (MFIPVTNICR…SDVSVQVAPN (235 aa)). The [4Fe-4S] cluster site is built by C9, C13, and C16.

Belongs to the radical SAM superfamily. CofG family. Consists of two subunits, CofG and CofH. [4Fe-4S] cluster serves as cofactor.

It carries out the reaction 5-amino-5-(4-hydroxybenzyl)-6-(D-ribitylimino)-5,6-dihydrouracil + S-adenosyl-L-methionine = 7,8-didemethyl-8-hydroxy-5-deazariboflavin + 5'-deoxyadenosine + L-methionine + NH4(+) + H(+). Its pathway is cofactor biosynthesis; coenzyme F0 biosynthesis. Functionally, catalyzes the radical-mediated synthesis of 7,8-didemethyl-8-hydroxy-5-deazariboflavin from 5-amino-5-(4-hydroxybenzyl)-6-(D-ribitylimino)-5,6-dihydrouracil. This Methanosarcina acetivorans (strain ATCC 35395 / DSM 2834 / JCM 12185 / C2A) protein is 7,8-didemethyl-8-hydroxy-5-deazariboflavin synthase.